The following is a 288-amino-acid chain: 4-hydroxybenzoate octaprenyltransferase (288 aa).

8 helical membrane-spanning segments follow: residues I23–I43, T46–V66, I98–T118, L141–V161, L165–T185, L213–M233, N234–Q254, and A268–L288.

Belongs to the UbiA prenyltransferase family. The cofactor is Mg(2+).

It localises to the cell inner membrane. The catalysed reaction is all-trans-octaprenyl diphosphate + 4-hydroxybenzoate = 4-hydroxy-3-(all-trans-octaprenyl)benzoate + diphosphate. The protein operates within cofactor biosynthesis; ubiquinone biosynthesis. In terms of biological role, catalyzes the prenylation of para-hydroxybenzoate (PHB) with an all-trans polyprenyl group. Mediates the second step in the final reaction sequence of ubiquinone-8 (UQ-8) biosynthesis, which is the condensation of the polyisoprenoid side chain with PHB, generating the first membrane-bound Q intermediate 3-octaprenyl-4-hydroxybenzoate. The protein is 4-hydroxybenzoate octaprenyltransferase of Yersinia enterocolitica serotype O:8 / biotype 1B (strain NCTC 13174 / 8081).